The chain runs to 561 residues: Trehalose-6-phosphate hydrolase (561 aa).

The Nucleophile role is filled by Asp203. The Proton donor role is filled by Glu254.

This sequence belongs to the glycosyl hydrolase 13 family.

Its subcellular location is the cytoplasm. The catalysed reaction is alpha,alpha-trehalose 6-phosphate + H2O = D-glucose 6-phosphate + D-glucose. Its activity is regulated as follows. Activity is stimulated by high salt concentrations with different efficiencies depending on the kind of salt. In vitro, inhibited by glucose. Functionally, hydrolyzes trehalose-6-phosphate to glucose and glucose 6-phosphate. Can also very effectively hydrolyze p-nitrophenyl-alpha-D-glucopyranoside, but not lactose, maltose, sucrose or sucrose-6-phosphate. Trehalose is also hydrolyzed, but to a much smaller extent than trehalose-6-phosphate. This chain is Trehalose-6-phosphate hydrolase, found in Bacillus subtilis (strain 168).